The following is a 184-amino-acid chain: Large ribosomal subunit protein uL6 (184 aa).

Belongs to the universal ribosomal protein uL6 family. In terms of assembly, part of the 50S ribosomal subunit.

Its function is as follows. This protein binds to the 23S rRNA, and is important in its secondary structure. It is located near the subunit interface in the base of the L7/L12 stalk, and near the tRNA binding site of the peptidyltransferase center. The chain is Large ribosomal subunit protein uL6 from Fervidobacterium nodosum (strain ATCC 35602 / DSM 5306 / Rt17-B1).